An 82-amino-acid chain; its full sequence is Small ribosomal subunit protein uS17 (82 aa).

Belongs to the universal ribosomal protein uS17 family. In terms of assembly, part of the 30S ribosomal subunit.

One of the primary rRNA binding proteins, it binds specifically to the 5'-end of 16S ribosomal RNA. This chain is Small ribosomal subunit protein uS17, found in Shewanella halifaxensis (strain HAW-EB4).